Reading from the N-terminus, the 213-residue chain is Large ribosomal subunit protein uL3 (213 aa).

It belongs to the universal ribosomal protein uL3 family. In terms of assembly, part of the 50S ribosomal subunit. Forms a cluster with proteins L14 and L19.

Its function is as follows. One of the primary rRNA binding proteins, it binds directly near the 3'-end of the 23S rRNA, where it nucleates assembly of the 50S subunit. The protein is Large ribosomal subunit protein uL3 of Petrotoga mobilis (strain DSM 10674 / SJ95).